A 335-amino-acid polypeptide reads, in one-letter code: Beta-ketoacyl-[acyl-carrier-protein] synthase III 1 (335 aa).

Active-site residues include cysteine 116 and histidine 256. Positions 257–261 are ACP-binding; that stretch reads QANQR. Asparagine 286 is an active-site residue.

Belongs to the thiolase-like superfamily. FabH family. As to quaternary structure, homodimer.

The protein localises to the cytoplasm. It carries out the reaction malonyl-[ACP] + acetyl-CoA + H(+) = 3-oxobutanoyl-[ACP] + CO2 + CoA. It functions in the pathway lipid metabolism; fatty acid biosynthesis. Catalyzes the condensation reaction of fatty acid synthesis by the addition to an acyl acceptor of two carbons from malonyl-ACP. Catalyzes the first condensation reaction which initiates fatty acid synthesis and may therefore play a role in governing the total rate of fatty acid production. Possesses both acetoacetyl-ACP synthase and acetyl transacylase activities. Its substrate specificity determines the biosynthesis of branched-chain and/or straight-chain of fatty acids. The protein is Beta-ketoacyl-[acyl-carrier-protein] synthase III 1 of Bacteroides thetaiotaomicron (strain ATCC 29148 / DSM 2079 / JCM 5827 / CCUG 10774 / NCTC 10582 / VPI-5482 / E50).